A 235-amino-acid chain; its full sequence is MTNLFTRHTRRSLTALALLSGGVYAADEVNAKILSRSLRVFVTGGQVLWDYRIHFKGIERDHPDYHSKLQSLNQRIAHRLLYLCFENGGIYTKFGQQLATFNHGLPREYTMTLAQLQDQAKPVSFDKVKQTIEAEMGRPWNECYKEFDQTPIASASLAQVHHAVDALGREMAVKVQYPHLELQMKADIRVIKWAFQFTEYCFPDVQLQWLFPEFQKALLAEVHFDAQCTALLIIF.

The N-terminal stretch at 1–25 (MTNLFTRHTRRSLTALALLSGGVYA) is a signal peptide. The RxLR-dEER motif lies at 36–60 (RSLRVFVTGGQVLWDYRIHFKGIER).

It belongs to the RxLR effector family.

It localises to the secreted. It is found in the host cytoplasm. The protein localises to the host nucleus. Its function is as follows. Effector that acts as a broad suppressor of cell death to interrupt plant immunity. Inhibits cell death induced by cell death-inducing proteins, including the PAMP elicitor INF1 from P.infestans. The chain is Secreted RxLR effector protein 27 from Plasmopara viticola (Downy mildew of grapevine).